A 274-amino-acid polypeptide reads, in one-letter code: MDKSIGVIDSGVGGLTVVHELMRQLPKEQLIYLGDTARCPYGPRSKEEVRQFTWEMVDFLLTKNIKMLVVACNTATAFTLKDLKEQLDIPVIGVIQPGARAAIKSTTNNQVGVIGTEGTISSGAYSQALEKIKSDIQVSGLACPPFVPMVERGVLSGPEAKAVVSEALRPFSNNKEMDTLILGCTHYPLLKSTIQEVMGEEVTVISSSEETARETSTLLDVHQIMNRSDLVPLHQFYTTGDLEIFIEIAKTIFQESHFQMLTIKQANISTNKVW.

Substrate-binding positions include 9–10 (DS) and 41–42 (YG). Cysteine 72 (proton donor/acceptor) is an active-site residue. 73–74 (NT) serves as a coordination point for substrate. The Proton donor/acceptor role is filled by cysteine 184. 185–186 (TH) contributes to the substrate binding site.

The protein belongs to the aspartate/glutamate racemases family.

The enzyme catalyses L-glutamate = D-glutamate. The protein operates within cell wall biogenesis; peptidoglycan biosynthesis. Its function is as follows. Provides the (R)-glutamate required for cell wall biosynthesis. In Oceanobacillus iheyensis (strain DSM 14371 / CIP 107618 / JCM 11309 / KCTC 3954 / HTE831), this protein is Glutamate racemase.